Reading from the N-terminus, the 655-residue chain is Very long-chain specific acyl-CoA dehydrogenase, mitochondrial (655 aa).

The N-terminal 40 residues, 1 to 40 (MRAARMAQSTGRQLLRLRGVSSWPGELLGQPRPGPARRPY), are a transit peptide targeting the mitochondrion. A disordered region spans residues 22–66 (SWPGELLGQPRPGPARRPYASGVAQAAVDQSDSQPSEASTREKRA). Residues 41 to 482 (ASGVAQAAVD…ALQGCMDKGK (442 aa)) form a catalytic region. Polar residues predominate over residues 49-59 (VDQSDSQPSEA). The residue at position 71 (Lys71) is an N6-acetyllysine; alternate. The residue at position 71 (Lys71) is an N6-succinyllysine; alternate. Lys195 carries the N6-succinyllysine modification. 214–223 (FCLTEPSSGS) provides a ligand contact to FAD. An S-nitrosocysteine modification is found at Cys237. Lys239 bears the N6-acetyllysine; alternate mark. Position 239 is an N6-succinyllysine; alternate (Lys239). Residue 249 to 251 (WIS) coordinates FAD. N6-acetyllysine; alternate is present on residues Lys276 and Lys278. 2 positions are modified to N6-succinyllysine; alternate: Lys276 and Lys278. Position 298 is an N6-acetyllysine (Lys298). An N6-acetyllysine; alternate modification is found at Lys331. N6-succinyllysine; alternate is present on Lys331. Lys372 carries the N6-succinyllysine modification. 461-463 (FEG) is a binding site for substrate. Glu462 (proton acceptor) is an active-site residue. An FAD-binding site is contributed by 464-466 (TND). Residue Lys482 is modified to N6-acetyllysine; alternate. Lys482 is modified (N6-succinyllysine; alternate). Residues 483–516 (ELSGLGNALKNPFGNAGLLLGEAGKQLRRRAGLG) form a membrane-anchoring region. A phosphoserine mark is found at Ser517 and Ser522. Lys550 carries the post-translational modification N6-acetyllysine. At Lys556 the chain carries N6-acetyllysine; alternate. Lys556 bears the N6-succinyllysine; alternate mark. Residue Gln562 coordinates FAD. Lys639 bears the N6-succinyllysine mark.

It belongs to the acyl-CoA dehydrogenase family. Homodimer. Homodimerizes after import into the mitochondrion. Requires FAD as cofactor. S-nitrosylation at Cys-237 in liver improves catalytic efficiency.

Its subcellular location is the mitochondrion inner membrane. The enzyme catalyses a very-long-chain 2,3-saturated fatty acyl-CoA + oxidized [electron-transfer flavoprotein] + H(+) = a very-long-chain (2E)-enoyl-CoA + reduced [electron-transfer flavoprotein]. It catalyses the reaction dodecanoyl-CoA + oxidized [electron-transfer flavoprotein] + H(+) = (2E)-dodecenoyl-CoA + reduced [electron-transfer flavoprotein]. The catalysed reaction is tetradecanoyl-CoA + oxidized [electron-transfer flavoprotein] + H(+) = (2E)-tetradecenoyl-CoA + reduced [electron-transfer flavoprotein]. It carries out the reaction oxidized [electron-transfer flavoprotein] + hexadecanoyl-CoA + H(+) = (2E)-hexadecenoyl-CoA + reduced [electron-transfer flavoprotein]. The enzyme catalyses octadecanoyl-CoA + oxidized [electron-transfer flavoprotein] + H(+) = (2E)-octadecenoyl-CoA + reduced [electron-transfer flavoprotein]. It catalyses the reaction eicosanoyl-CoA + oxidized [electron-transfer flavoprotein] + H(+) = (2E)-eicosenoyl-CoA + reduced [electron-transfer flavoprotein]. The catalysed reaction is docosanoyl-CoA + oxidized [electron-transfer flavoprotein] + H(+) = (2E)-docosenoyl-CoA + reduced [electron-transfer flavoprotein]. It carries out the reaction tetracosanoyl-CoA + oxidized [electron-transfer flavoprotein] + H(+) = (2E)-tetracosenoyl-CoA + reduced [electron-transfer flavoprotein]. The protein operates within lipid metabolism; mitochondrial fatty acid beta-oxidation. Its function is as follows. Very long-chain specific acyl-CoA dehydrogenase is one of the acyl-CoA dehydrogenases that catalyze the first step of mitochondrial fatty acid beta-oxidation, an aerobic process breaking down fatty acids into acetyl-CoA and allowing the production of energy from fats. The first step of fatty acid beta-oxidation consists in the removal of one hydrogen from C-2 and C-3 of the straight-chain fatty acyl-CoA thioester, resulting in the formation of trans-2-enoyl-CoA. Among the different mitochondrial acyl-CoA dehydrogenases, very long-chain specific acyl-CoA dehydrogenase acts specifically on acyl-CoAs with saturated 12 to 24 carbons long primary chains. The sequence is that of Very long-chain specific acyl-CoA dehydrogenase, mitochondrial from Bos taurus (Bovine).